The following is a 432-amino-acid chain: 23S rRNA (uracil(1939)-C(5))-methyltransferase RlmD (432 aa).

The TRAM domain occupies 10 to 68; it reads RVTTREIITVTTDGLDAFGQGVARHHGKALFIAGLLPGERAEVVLSEDKKQFARGDVKK. Residues C81, C87, C90, and C162 each coordinate [4Fe-4S] cluster. Residues Q265, F294, N299, E315, N342, and D363 each coordinate S-adenosyl-L-methionine. The active-site Nucleophile is C389.

The protein belongs to the class I-like SAM-binding methyltransferase superfamily. RNA M5U methyltransferase family. RlmD subfamily.

It carries out the reaction uridine(1939) in 23S rRNA + S-adenosyl-L-methionine = 5-methyluridine(1939) in 23S rRNA + S-adenosyl-L-homocysteine + H(+). Its function is as follows. Catalyzes the formation of 5-methyl-uridine at position 1939 (m5U1939) in 23S rRNA. The polypeptide is 23S rRNA (uracil(1939)-C(5))-methyltransferase RlmD (Cronobacter sakazakii (strain ATCC BAA-894) (Enterobacter sakazakii)).